The chain runs to 456 residues: Putative E3 ubiquitin-protein ligase XBAT31 (456 aa).

ANK repeat units follow at residues 45–74, 78–107, 112–141, 157–186, and 194–224; these read DRHS…NPDL, HKQT…NILM, NRRT…SSPV, KGAT…LVCA, and PGST…RLQR. The RING-type zinc-finger motif lies at 319 to 368; the sequence is CCICFEQVCTIEVKDCGHQMCAQCTLALCCHNKPNPTTSTVTPPVCPFCR.

The catalysed reaction is S-ubiquitinyl-[E2 ubiquitin-conjugating enzyme]-L-cysteine + [acceptor protein]-L-lysine = [E2 ubiquitin-conjugating enzyme]-L-cysteine + N(6)-ubiquitinyl-[acceptor protein]-L-lysine.. Its pathway is protein modification; protein ubiquitination. Its function is as follows. No E3 ubiquitin-protein ligase activity observed when associated with the E2 enzyme UBC8 in vitro. This Arabidopsis thaliana (Mouse-ear cress) protein is Putative E3 ubiquitin-protein ligase XBAT31 (XBAT31).